We begin with the raw amino-acid sequence, 390 residues long: Phosphoglycerate kinase (390 aa).

Substrate contacts are provided by residues 21-23, arginine 36, 59-62, arginine 114, and arginine 147; these read DLN and HLGR. ATP contacts are provided by residues lysine 198, glutamate 314, and 340 to 343; that span reads GGDT.

The protein belongs to the phosphoglycerate kinase family. In terms of assembly, monomer.

The protein resides in the cytoplasm. It carries out the reaction (2R)-3-phosphoglycerate + ATP = (2R)-3-phospho-glyceroyl phosphate + ADP. Its pathway is carbohydrate degradation; glycolysis; pyruvate from D-glyceraldehyde 3-phosphate: step 2/5. The polypeptide is Phosphoglycerate kinase (pgk) (Buchnera aphidicola subsp. Acyrthosiphon pisum (strain APS) (Acyrthosiphon pisum symbiotic bacterium)).